Reading from the N-terminus, the 480-residue chain is Acetyl-coenzyme A carboxylase carboxyl transferase subunit beta, chloroplastic (480 aa).

The tract at residues 25–48 is disordered; sequence TSSLGPIENASESKDPNINDTDKN. The segment covering 35–47 has biased composition (basic and acidic residues); that stretch reads SESKDPNINDTDK. In terms of domain architecture, CoA carboxyltransferase N-terminal spans 216–480; the sequence is LWVQCENCYG…LHTFFPLNQN (265 aa). Zn(2+) contacts are provided by Cys-220, Cys-223, Cys-239, and Cys-242. The C4-type zinc finger occupies 220–242; that stretch reads CENCYGLNYKKFFKSKMNLCEQC.

It belongs to the AccD/PCCB family. In terms of assembly, acetyl-CoA carboxylase is a heterohexamer composed of biotin carboxyl carrier protein, biotin carboxylase and 2 subunits each of ACCase subunit alpha and ACCase plastid-coded subunit beta (accD). It depends on Zn(2+) as a cofactor.

It localises to the plastid. Its subcellular location is the chloroplast stroma. The catalysed reaction is N(6)-carboxybiotinyl-L-lysyl-[protein] + acetyl-CoA = N(6)-biotinyl-L-lysyl-[protein] + malonyl-CoA. It functions in the pathway lipid metabolism; malonyl-CoA biosynthesis; malonyl-CoA from acetyl-CoA: step 1/1. Component of the acetyl coenzyme A carboxylase (ACC) complex. Biotin carboxylase (BC) catalyzes the carboxylation of biotin on its carrier protein (BCCP) and then the CO(2) group is transferred by the transcarboxylase to acetyl-CoA to form malonyl-CoA. The chain is Acetyl-coenzyme A carboxylase carboxyl transferase subunit beta, chloroplastic from Helianthus annuus (Common sunflower).